The chain runs to 308 residues: Oxygen-dependent coproporphyrinogen-III oxidase (308 aa).

Substrate is bound at residue S100. A divalent metal cation contacts are provided by H104 and H114. Residue H114 is the Proton donor of the active site. A substrate-binding site is contributed by 116 to 118 (NFR). Positions 153 and 183 each coordinate a divalent metal cation. Residues 248–283 (YVEFNLVFDRGTIFGLQSGGRTESILSSMPPMASWR) form an important for dimerization region. 266–268 (GGR) contacts substrate.

Belongs to the aerobic coproporphyrinogen-III oxidase family. As to quaternary structure, homodimer. A divalent metal cation serves as cofactor.

Its subcellular location is the cytoplasm. The catalysed reaction is coproporphyrinogen III + O2 + 2 H(+) = protoporphyrinogen IX + 2 CO2 + 2 H2O. Its pathway is porphyrin-containing compound metabolism; protoporphyrin-IX biosynthesis; protoporphyrinogen-IX from coproporphyrinogen-III (O2 route): step 1/1. Functionally, involved in the heme biosynthesis. Catalyzes the aerobic oxidative decarboxylation of propionate groups of rings A and B of coproporphyrinogen-III to yield the vinyl groups in protoporphyrinogen-IX. This is Oxygen-dependent coproporphyrinogen-III oxidase from Francisella tularensis subsp. novicida (strain U112).